We begin with the raw amino-acid sequence, 586 residues long: Ezrin (586 aa).

An FERM domain is found at 2-295 (PKPINVRVTT…GNHELYMRRR (294 aa)). Residue K60 is modified to N6-acetyllysine. A [IL]-x-C-x-x-[DE] motif motif is present at residues 115–120 (IYCPPE). Position 146 is a phosphotyrosine; by PDGFR (Y146). Residues 244-586 (EIRNISFNDK…KQRIDEFEAM (343 aa)) form an interaction with SCYL3 region. Positions 302–462 (VQQMKAQARE…QDDLVKTKEE (161 aa)) form a coiled coil. Positions 305-340 (MKAQAREEKHQKQLERQQLESEKKRREAVEQEKEQM) are disordered. Basic and acidic residues predominate over residues 308 to 340 (QAREEKHQKQLERQQLESEKKRREAVEQEKEQM). Y354 carries the phosphotyrosine; by PDGFR modification. At S366 the chain carries Phosphoserine. A Phosphotyrosine modification is found at Y478. S535 bears the Phosphoserine mark. T567 is subject to Phosphothreonine; by ROCK2 and PKC/PRKCI.

In terms of assembly, interacts with PALS1. Found in a complex with EZR, PODXL and NHERF2. Interacts with MCC, PLEKHG6, PODXL, SCYL3/PACE1, NHERF1, NHERF2 and TMEM8B. Interacts (when phosphorylated) with FES/FPS. Interacts with dimeric S100P, the interaction may be activating through unmasking of F-actin binding sites. Identified in complexes that contain VIM, EZR, AHNAK, BFSP1, BFSP2, ANK2, PLEC, PRX and spectrin. Detected in a complex composed of at least EZR, AHNAK, PPL and PRX. Interacts with PDPN (via cytoplasmic domain); activates RHOA and promotes epithelial-mesenchymal transition. Interacts with SPN/CD43 cytoplasmic tail, CD44 and ICAM2. Interacts with SLC9A3; interaction targets SLC9A3 to the apical membrane. Interacts with SLC9A1; regulates interactions of SLC9A1 with cytoskeletal and promotes stress fiber formation. Interacts with CLIC5; may work together in a complex which also includes RDX and MYO6 to stabilize linkages between the plasma membrane and subjacent actin cytoskeleton at the base of stereocilia. Post-translationally, phosphorylated by tyrosine-protein kinases. Phosphorylation by ROCK2 suppresses the head-to-tail association of the N-terminal and C-terminal halves resulting in an opened conformation which is capable of actin and membrane-binding. In terms of processing, S-nitrosylation is induced by interferon-gamma and oxidatively-modified low-densitity lipoprotein (LDL(ox)) possibly implicating the iNOS-S100A8/9 transnitrosylase complex.

Its subcellular location is the apical cell membrane. It localises to the cell projection. It is found in the microvillus membrane. The protein localises to the ruffle membrane. The protein resides in the cytoplasm. Its subcellular location is the cell cortex. It localises to the cytoskeleton. It is found in the microvillus. A head-to-tail association, of the N-terminal and C-terminal halves results in a closed conformation (inactive form) which is incapable of actin or membrane-binding. Probably involved in connections of major cytoskeletal structures to the plasma membrane. In epithelial cells, required for the formation of microvilli and membrane ruffles on the apical pole. Along with PLEKHG6, required for normal macropinocytosis. The protein is Ezrin (EZR) of Oryctolagus cuniculus (Rabbit).